Consider the following 324-residue polypeptide: Meiotic recombination protein DLH1 (324 aa).

ATP is bound at residue 112 to 119 (GEFRCGKT). Arginine 214 serves as a coordination point for dsDNA. SsDNA-binding residues include arginine 214, tyrosine 217, arginine 220, arginine 226, and arginine 296. DsDNA-binding residues include arginine 220 and arginine 226.

This sequence belongs to the RecA family. DMC1 subfamily. In terms of assembly, double stacked ring-shaped homooctamer.

The protein resides in the nucleus. Required for meiotic recombination, synaptonemal complex formation and cell cycle progression. The protein is Meiotic recombination protein DLH1 (DLH1) of Candida albicans (Yeast).